We begin with the raw amino-acid sequence, 56 residues long: Large ribosomal subunit protein bL32c (56 aa).

It belongs to the bacterial ribosomal protein bL32 family.

It is found in the plastid. Its subcellular location is the chloroplast. The protein is Large ribosomal subunit protein bL32c of Tupiella akineta (Green alga).